Here is a 390-residue protein sequence, read N- to C-terminus: Lipoyl synthase, mitochondrial (390 aa).

Residues 1–18 constitute a mitochondrion transit peptide; the sequence is MALYRAPKLQRSLLNRCL. The [4Fe-4S] cluster site is built by C99, C104, C110, C137, C141, C144, and S351. The region spanning 120 to 340 is the Radical SAM core domain; sequence AEGRSAATAT…KQVAEDLGFL (221 aa).

It belongs to the radical SAM superfamily. Lipoyl synthase family. Requires [4Fe-4S] cluster as cofactor.

Its subcellular location is the mitochondrion. The enzyme catalyses [[Fe-S] cluster scaffold protein carrying a second [4Fe-4S](2+) cluster] + N(6)-octanoyl-L-lysyl-[protein] + 2 oxidized [2Fe-2S]-[ferredoxin] + 2 S-adenosyl-L-methionine + 4 H(+) = [[Fe-S] cluster scaffold protein] + N(6)-[(R)-dihydrolipoyl]-L-lysyl-[protein] + 4 Fe(3+) + 2 hydrogen sulfide + 2 5'-deoxyadenosine + 2 L-methionine + 2 reduced [2Fe-2S]-[ferredoxin]. Its pathway is protein modification; protein lipoylation via endogenous pathway; protein N(6)-(lipoyl)lysine from octanoyl-[acyl-carrier-protein]: step 2/2. Catalyzes the radical-mediated insertion of two sulfur atoms into the C-6 and C-8 positions of the octanoyl moiety bound to the lipoyl domains of lipoate-dependent enzymes, thereby converting the octanoylated domains into lipoylated derivatives. In Coprinopsis cinerea (strain Okayama-7 / 130 / ATCC MYA-4618 / FGSC 9003) (Inky cap fungus), this protein is Lipoyl synthase, mitochondrial.